The following is a 164-amino-acid chain: C-phycoerythrin alpha chain (164 aa).

(2R,3E)-phycoerythrobilin-binding residues include cysteine 82 and cysteine 139.

Belongs to the phycobiliprotein family. In terms of assembly, heterodimer of an alpha and a beta chain. Post-translationally, contains two covalently linked bilin chromophores.

The protein resides in the cellular thylakoid membrane. Light-harvesting photosynthetic bile pigment-protein from the phycobiliprotein complex. This is C-phycoerythrin alpha chain (cpeA) from Pseudanabaena tenuis (strain PCC 7409).